Here is a 309-residue protein sequence, read N- to C-terminus: Phytoene synthase (309 aa).

It belongs to the phytoene/squalene synthase family.

It carries out the reaction 2 (2E,6E,10E)-geranylgeranyl diphosphate = 15-cis-phytoene + 2 diphosphate. Its pathway is carotenoid biosynthesis; phytoene biosynthesis; all-trans-phytoene from geranylgeranyl diphosphate: step 1/1. Catalyzes the reaction from prephytoene diphosphate to phytoene. In Arthrospira platensis (Spirulina platensis), this protein is Phytoene synthase (crtB).